Reading from the N-terminus, the 183-residue chain is Protein jagunal homolog 1 (183 aa).

The Cytoplasmic segment spans residues 1–39 (MASRAGPRAAGTDGSDFQHRERVAMHYQMSVTLKYEIKK). Phosphoserine is present on serine 3. A helical transmembrane segment spans residues 40–60 (LIYVHLVIWLLLVAKMSVGHL). Residues 61–71 (RLLSHDQVAMP) are Lumenal-facing. A helical transmembrane segment spans residues 72–92 (YQWEYPYLLSIVPSVLGLLSF). Residues 93–96 (PRNN) are Cytoplasmic-facing. A helical transmembrane segment spans residues 97–117 (ISYLVLSMISMGLFSIAPLIY). Topologically, residues 118-137 (GSMEMFPAAQQLYRHGKAYR) are lumenal. Residues 138–158 (FLFGFSAVSVMYLVLVLAVQV) form a helical membrane-spanning segment. Over 159 to 183 (HAWQLYYSKKLLDSWFTSTQEKKRK) the chain is Cytoplasmic.

The protein belongs to the jagunal family. As to quaternary structure, interacts with COPA, COPB2 and COPG2.

It localises to the endoplasmic reticulum membrane. Functionally, endoplasmic reticulum transmembrane protein involved in vesicle-mediated transport, which is required for neutrophil function. Required for vesicle-mediated transport; it is however unclear whether it is involved in early secretory pathway or intracellular protein transport. Acts as a regulator of neutrophil function, probably via its role in vesicle-mediated transport: required for defense against fungal pathogens and for granulocyte colony-stimulating factor (GM-CSF) signaling pathway; possibly by regulating glycosylation and/or targeting of proteins contributing to the viability and migration of neutrophils. This is Protein jagunal homolog 1 from Mus musculus (Mouse).